Consider the following 1802-residue polypeptide: U3 small nucleolar RNA-associated protein 10 (1802 aa).

The stretch at 581 to 618 (MDLQALLPFVLVTLADPSERVRREAAGILTIIGSLHKN) is one HEAT 1 repeat. The next 2 helical transmembrane spans lie at 946-966 (VQSG…AIVN) and 1002-1022 (ALLL…HSVM). 4 HEAT repeats span residues 1046-1083 (QTID…AFEH), 1253-1290 (LSLV…QNPE), 1297-1335 (TRML…KYGK), and 1758-1795 (ALLP…VLGE).

Belongs to the HEATR1/UTP10 family. Component of the ribosomal small subunit (SSU) processome.

The protein resides in the nucleus. It is found in the nucleolus. It localises to the membrane. In terms of biological role, involved in nucleolar processing of pre-18S ribosomal RNA. Involved in ribosome biosynthesis. This chain is U3 small nucleolar RNA-associated protein 10, found in Aspergillus oryzae (strain ATCC 42149 / RIB 40) (Yellow koji mold).